Reading from the N-terminus, the 400-residue chain is Tyrosine--tRNA ligase 2 (400 aa).

The short motif at 46 to 55 (PSAPDIHLGH) is the 'HIGH' region element. A 'KMSKS' region motif is present at residues 230 to 234 (KMSKS). Lys233 contacts ATP. An S4 RNA-binding domain is found at 339 to 399 (NNLIEAIVKI…GKKKIVKLLV (61 aa)).

It belongs to the class-I aminoacyl-tRNA synthetase family. TyrS type 2 subfamily. As to quaternary structure, homodimer.

The protein resides in the cytoplasm. The catalysed reaction is tRNA(Tyr) + L-tyrosine + ATP = L-tyrosyl-tRNA(Tyr) + AMP + diphosphate + H(+). In terms of biological role, catalyzes the attachment of tyrosine to tRNA(Tyr) in a two-step reaction: tyrosine is first activated by ATP to form Tyr-AMP and then transferred to the acceptor end of tRNA(Tyr). The chain is Tyrosine--tRNA ligase 2 from Clostridium acetobutylicum (strain ATCC 824 / DSM 792 / JCM 1419 / IAM 19013 / LMG 5710 / NBRC 13948 / NRRL B-527 / VKM B-1787 / 2291 / W).